The primary structure comprises 493 residues: Alpha-amylase-related protein (493 aa).

An N-terminal signal peptide occupies residues 1 to 19; the sequence is MFKLAFTLTLCLAGSLSLA. Q20 carries the post-translational modification Pyrrolidone carboxylic acid. A disulfide bridge connects residues C47 and C103. Positions 117, 168, and 177 each coordinate Ca(2+). C156 and C170 are disulfide-bonded. Chloride is bound at residue R205. D207 acts as the Nucleophile in catalysis. H211 contributes to the Ca(2+) binding site. The active-site Proton donor is the E244. Chloride contacts are provided by N307 and R342. Disulfide bonds link C375-C381, C417-C440, and C447-C459.

Belongs to the glycosyl hydrolase 13 family. Monomer. Ca(2+) serves as cofactor. The cofactor is chloride.

It is found in the secreted. It catalyses the reaction Endohydrolysis of (1-&gt;4)-alpha-D-glucosidic linkages in polysaccharides containing three or more (1-&gt;4)-alpha-linked D-glucose units.. This chain is Alpha-amylase-related protein (Amyrel), found in Drosophila orena (Fruit fly).